Consider the following 157-residue polypeptide: SsrA-binding protein (157 aa).

The interval 132–157 is disordered; sequence KLHDKRETEKKRDWSREKGRLLRSRG. Basic and acidic residues predominate over residues 135–151; the sequence is DKRETEKKRDWSREKGR.

The protein belongs to the SmpB family.

Its subcellular location is the cytoplasm. Required for rescue of stalled ribosomes mediated by trans-translation. Binds to transfer-messenger RNA (tmRNA), required for stable association of tmRNA with ribosomes. tmRNA and SmpB together mimic tRNA shape, replacing the anticodon stem-loop with SmpB. tmRNA is encoded by the ssrA gene; the 2 termini fold to resemble tRNA(Ala) and it encodes a 'tag peptide', a short internal open reading frame. During trans-translation Ala-aminoacylated tmRNA acts like a tRNA, entering the A-site of stalled ribosomes, displacing the stalled mRNA. The ribosome then switches to translate the ORF on the tmRNA; the nascent peptide is terminated with the 'tag peptide' encoded by the tmRNA and targeted for degradation. The ribosome is freed to recommence translation, which seems to be the essential function of trans-translation. This is SsrA-binding protein from Rhodopseudomonas palustris (strain ATCC BAA-98 / CGA009).